The chain runs to 143 residues: Actin-depolymerizing factor 5 (143 aa).

The ADF-H domain maps to 11 to 143 (GMRVTDECTS…GFDIIQDRAK (133 aa)).

Belongs to the actin-binding proteins ADF family. In terms of tissue distribution, expressed exclusively in root tip meristem.

The protein localises to the cytoplasm. It is found in the cytoskeleton. In terms of biological role, actin-depolymerizing protein. Severs actin filaments (F-actin) and binds to actin monomers. This Arabidopsis thaliana (Mouse-ear cress) protein is Actin-depolymerizing factor 5 (ADF5).